The following is a 360-amino-acid chain: Phospho-N-acetylmuramoyl-pentapeptide-transferase (360 aa).

10 helical membrane passes run 26–46 (AVLS…KMIL), 73–93 (TMGG…WGDL), 94–114 (SNPY…IGFV), 132–152 (WKYF…YMIG), 168–188 (IMPQ…VGTS), 199–219 (GLAI…AWAT), 239–259 (LVIF…FNTY), 263–283 (VFMG…IAVL), 288–308 (FLLV…ILQV), and 338–358 (VIIR…VTLK).

Belongs to the glycosyltransferase 4 family. MraY subfamily. Requires Mg(2+) as cofactor.

The protein resides in the cell inner membrane. The catalysed reaction is UDP-N-acetyl-alpha-D-muramoyl-L-alanyl-gamma-D-glutamyl-meso-2,6-diaminopimeloyl-D-alanyl-D-alanine + di-trans,octa-cis-undecaprenyl phosphate = di-trans,octa-cis-undecaprenyl diphospho-N-acetyl-alpha-D-muramoyl-L-alanyl-D-glutamyl-meso-2,6-diaminopimeloyl-D-alanyl-D-alanine + UMP. It participates in cell wall biogenesis; peptidoglycan biosynthesis. Catalyzes the initial step of the lipid cycle reactions in the biosynthesis of the cell wall peptidoglycan: transfers peptidoglycan precursor phospho-MurNAc-pentapeptide from UDP-MurNAc-pentapeptide onto the lipid carrier undecaprenyl phosphate, yielding undecaprenyl-pyrophosphoryl-MurNAc-pentapeptide, known as lipid I. The sequence is that of Phospho-N-acetylmuramoyl-pentapeptide-transferase from Actinobacillus succinogenes (strain ATCC 55618 / DSM 22257 / CCUG 43843 / 130Z).